A 934-amino-acid chain; its full sequence is Diacylglycerol kinase theta (934 aa).

The disordered stretch occupies residues 1 to 50; that stretch reads MAAAAEPGARTWPGSGSPRLGSPAGSPVLGISGRTRPGSGPERTSRAIGS. Phosphoserine occurs at positions 22 and 26. 3 consecutive Phorbol-ester/DAG-type zinc fingers follow at residues 54-102, 115-162, and 177-228; these read GHSF…KTPC, AHCF…CSDC, and HHHW…APEC. Positions 387–486 constitute a Ras-associating domain; the sequence is TQEILKIYPG…TRFYVAETRA (100 aa). 2 consecutive short sequence motifs (LXXLL motif) follow at residues 547–551 and 566–570; these read LYMLA and LPDVL. The region spanning 576 to 713 is the DAGKc domain; it reads PDCCPLLVFV…MDRWTILLDA (138 aa). The segment covering 905 to 916 has biased composition (basic residues); the sequence is LRKAKQKPRKAG. Residues 905 to 934 form a disordered region; that stretch reads LRKAKQKPRKAGANRDTRVDTLPAPEGNPL.

The protein belongs to the eukaryotic diacylglycerol kinase family. As to quaternary structure, interacts with RHOA (constitutively activated, GTP-bound); the interaction inhibits DGKQ. Interacts with PRKCE. Interacts with PRKCH. Interacts with PLCB1. Interacts with NR5A1; the interaction requires both LXXLL motifs in DGKQ and is required for full phosphatidic acid-mediated activation of NR5A1. In terms of processing, phosphorylated by PRKCE and PRKCH in vitro. In terms of tissue distribution, widely expressed in all brain regions, including the cortex and hippocampus with a specific expression in neuronal cells (at protein level).

It is found in the cytoplasm. Its subcellular location is the cytosol. The protein resides in the cell membrane. It localises to the synapse. The protein localises to the cytoskeleton. It is found in the nucleus. Its subcellular location is the nucleus speckle. The protein resides in the nucleus matrix. The catalysed reaction is a 1,2-diacyl-sn-glycerol + ATP = a 1,2-diacyl-sn-glycero-3-phosphate + ADP + H(+). The enzyme catalyses a 1-O-alkyl-sn-glycerol + ATP = a 1-O-alkyl-sn-glycero-3-phosphate + ADP + H(+). It catalyses the reaction 1-O-alkyl-2-acyl-sn-glycerol + ATP = 1-O-alkyl-2-acyl-sn-glycero-3-phosphate + ADP + H(+). It carries out the reaction 1,2-di-(9Z-octadecenoyl)-sn-glycerol + ATP = 1,2-di-(9Z-octadecenoyl)-sn-glycero-3-phosphate + ADP + H(+). The catalysed reaction is 1-O-hexadecyl-sn-glycerol + ATP = 1-O-hexadecyl-sn-glycero-3-phosphate + ADP + H(+). The enzyme catalyses 1-O-hexadecyl-2-acetyl-sn-glycerol + ATP = 1-O-hexadecyl-2-acetyl-sn-glycero-3-phosphate + ADP + H(+). It catalyses the reaction 1-octadecanoyl-2-(5Z,8Z,11Z,14Z-eicosatetraenoyl)-sn-glycerol + ATP = 1-octadecanoyl-2-(5Z,8Z,11Z,14Z-eicosatetraenoyl)-sn-glycero-3-phosphate + ADP + H(+). The protein operates within lipid metabolism; glycerolipid metabolism. With respect to regulation, activated by phosphatidylserine. Diacylglycerol kinase that converts diacylglycerol/DAG into phosphatidic acid/phosphatidate/PA and regulates the respective levels of these two bioactive lipids. Thereby, acts as a central switch between the signaling pathways activated by these second messengers with different cellular targets and opposite effects in numerous biological processes. Within the adrenocorticotropic hormone signaling pathway, produces phosphatidic acid which in turn activates NR5A1 and subsequent steroidogenic gene transcription. Also functions downstream of the nerve growth factor signaling pathway being specifically activated in the nucleus by the growth factor. Through its diacylglycerol activity also regulates synaptic vesicle endocytosis. This is Diacylglycerol kinase theta (Dgkq) from Mus musculus (Mouse).